Consider the following 177-residue polypeptide: NAD(P)H-quinone oxidoreductase subunit 6, chloroplastic (177 aa).

A run of 5 helical transmembrane segments spans residues 10 to 30 (ILLVSLGSGLIVGGLGVVLLT), 32 to 52 (PIYSAFSLGLVLVCISLFYIP), 61 to 81 (AQLLIYVGAINVLILFAVMFM), 92 to 112 (FWTVGDGFTSLVCTSIFFSLI), and 152 to 172 (FYLPFELISIILLVSLVGAIA).

It belongs to the complex I subunit 6 family. As to quaternary structure, NDH is composed of at least 16 different subunits, 5 of which are encoded in the nucleus.

It localises to the plastid. It is found in the chloroplast thylakoid membrane. The enzyme catalyses a plastoquinone + NADH + (n+1) H(+)(in) = a plastoquinol + NAD(+) + n H(+)(out). It catalyses the reaction a plastoquinone + NADPH + (n+1) H(+)(in) = a plastoquinol + NADP(+) + n H(+)(out). NDH shuttles electrons from NAD(P)H:plastoquinone, via FMN and iron-sulfur (Fe-S) centers, to quinones in the photosynthetic chain and possibly in a chloroplast respiratory chain. The immediate electron acceptor for the enzyme in this species is believed to be plastoquinone. Couples the redox reaction to proton translocation, and thus conserves the redox energy in a proton gradient. This is NAD(P)H-quinone oxidoreductase subunit 6, chloroplastic (ndhG) from Nymphaea alba (White water-lily).